The chain runs to 154 residues: uncharacterized protein (154 aa).

At Ser47 the chain carries Phosphoserine.

The protein to yeast YPL229w.

This is an uncharacterized protein from Saccharomyces cerevisiae (strain ATCC 204508 / S288c) (Baker's yeast).